Reading from the N-terminus, the 392-residue chain is Multidrug resistance protein MdtL (392 aa).

12 helical membrane-spanning segments follow: residues F4–V24, A38–A58, V70–A90, L95–I115, L131–M151, S158–L178, I209–L229, A246–F266, T270–T290, L294–M314, V331–G351, and M357–T377.

This sequence belongs to the major facilitator superfamily. DHA1 family. MdtL (TC 2.A.1.2.22) subfamily.

It is found in the cell inner membrane. This is Multidrug resistance protein MdtL from Klebsiella pneumoniae (strain 342).